A 270-amino-acid chain; its full sequence is Dermonecrotic toxin LsaSicTox-alphaIB1av (270 aa).

His-2 is an active-site residue. Residues Glu-22 and Asp-24 each coordinate Mg(2+). The active-site Nucleophile is His-38. 2 disulfide bridges follow: Cys-42/Cys-48 and Cys-44/Cys-187. Asp-82 is a Mg(2+) binding site.

The protein belongs to the arthropod phospholipase D family. Class II subfamily. Mg(2+) serves as cofactor. In terms of tissue distribution, expressed by the venom gland.

It localises to the secreted. It carries out the reaction an N-(acyl)-sphingosylphosphocholine = an N-(acyl)-sphingosyl-1,3-cyclic phosphate + choline. The catalysed reaction is an N-(acyl)-sphingosylphosphoethanolamine = an N-(acyl)-sphingosyl-1,3-cyclic phosphate + ethanolamine. The enzyme catalyses a 1-acyl-sn-glycero-3-phosphocholine = a 1-acyl-sn-glycero-2,3-cyclic phosphate + choline. It catalyses the reaction a 1-acyl-sn-glycero-3-phosphoethanolamine = a 1-acyl-sn-glycero-2,3-cyclic phosphate + ethanolamine. Dermonecrotic toxins cleave the phosphodiester linkage between the phosphate and headgroup of certain phospholipids (sphingolipid and lysolipid substrates), forming an alcohol (often choline) and a cyclic phosphate. This toxin acts on sphingomyelin (SM). It may also act on ceramide phosphoethanolamine (CPE), lysophosphatidylcholine (LPC) and lysophosphatidylethanolamine (LPE), but not on lysophosphatidylserine (LPS), and lysophosphatidylglycerol (LPG). It acts by transphosphatidylation, releasing exclusively cyclic phosphate products as second products. Induces dermonecrosis, hemolysis, increased vascular permeability, edema, inflammatory response, and platelet aggregation. This chain is Dermonecrotic toxin LsaSicTox-alphaIB1av, found in Loxosceles sabina (Tucson recluse spider).